The chain runs to 388 residues: Oligogalacturonide lyase (388 aa).

The protein resides in the periplasm. It carries out the reaction 4-(4-deoxy-alpha-D-galact-4-enuronosyl)-D-galacturonate = 2 5-dehydro-4-deoxy-D-glucuronate. Its pathway is glycan metabolism; pectin degradation; 2-dehydro-3-deoxy-D-gluconate from pectin: step 3/5. Involved in degradation of pectin, which causes soft-rod disease in plants. The sequence is that of Oligogalacturonide lyase (ogl) from Pectobacterium atrosepticum (strain SCRI 1043 / ATCC BAA-672) (Erwinia carotovora subsp. atroseptica).